Reading from the N-terminus, the 353-residue chain is 4-hydroxy-2-oxovalerate aldolase 2 (353 aa).

The 253-residue stretch at 14–266 folds into the Pyruvate carboxyltransferase domain; that stretch reads VRMTDTSLRD…KTGIDFFDIA (253 aa). A substrate-binding site is contributed by 22–23; sequence RD. D23 contacts Mn(2+). The Proton acceptor role is filled by H26. S176 and H205 together coordinate substrate. Mn(2+) is bound by residues H205 and H207. Position 296 (Y296) interacts with substrate.

It belongs to the 4-hydroxy-2-oxovalerate aldolase family.

It catalyses the reaction (S)-4-hydroxy-2-oxopentanoate = acetaldehyde + pyruvate. In Mycobacterium sp. (strain JLS), this protein is 4-hydroxy-2-oxovalerate aldolase 2.